A 146-amino-acid polypeptide reads, in one-letter code: Protein new-glue 3 (146 aa).

An N-terminal signal peptide occupies residues 1 to 23 (MRYSCVLLLLATVACLLIPQTGG). A disordered region spans residues 23 to 146 (GSTATTTSTS…RRARSARRLS (124 aa)). The span at 24 to 66 (STATTTSTSASATTTTSASATTTTASDTTTTTAATTTTSSSSS) shows a compositional bias: low complexity. 4 repeat units span residues 31-38 (TSASATTT), 39-46 (TSASATTT), 47-53 (TASDTTT), and 54-61 (TTAATTTT). The segment at 31–61 (TSASATTTTSASATTTTASDTTTTTAATTTT) is 4 X 8 AA approximate tandem repeats of T-S-A-S-A-T-T-T. Basic residues predominate over residues 67 to 92 (KSKKKKRTYHYTRHVYRPKRIRHIYR). The span at 93–106 (HKADDDESSTDRTS) shows a compositional bias: basic and acidic residues. The segment covering 116 to 132 (SSSSSSSGSTSSRSGNS) has biased composition (low complexity). Positions 133–146 (RIRRRRARSARRLS) are enriched in basic residues.

As to expression, salivary gland specific.

Its subcellular location is the secreted. This chain is Protein new-glue 3 (ng3), found in Drosophila melanogaster (Fruit fly).